The chain runs to 208 residues: Thymidylate kinase (208 aa).

Residue 12–19 participates in ATP binding; it reads GVDGAGKS.

Belongs to the thymidylate kinase family.

The catalysed reaction is dTMP + ATP = dTDP + ADP. Phosphorylation of dTMP to form dTDP in both de novo and salvage pathways of dTTP synthesis. The protein is Thymidylate kinase of Bordetella bronchiseptica (strain ATCC BAA-588 / NCTC 13252 / RB50) (Alcaligenes bronchisepticus).